Here is a 631-residue protein sequence, read N- to C-terminus: tRNA uridine 5-carboxymethylaminomethyl modification enzyme MnmG (631 aa).

15 to 20 (GAGHAG) contributes to the FAD binding site. Residues 203–232 (TPPRVDGNTVDYSKTQEEPGDKEPRHFSYT) form a disordered region. Over residues 216–232 (KTQEEPGDKEPRHFSYT) the composition is skewed to basic and acidic residues. Residue 276 to 290 (GPRYCPSIEDKVVRF) coordinates NAD(+).

Belongs to the MnmG family. As to quaternary structure, homodimer. Heterotetramer of two MnmE and two MnmG subunits. FAD serves as cofactor.

Its subcellular location is the cytoplasm. NAD-binding protein involved in the addition of a carboxymethylaminomethyl (cmnm) group at the wobble position (U34) of certain tRNAs, forming tRNA-cmnm(5)s(2)U34. In Lactobacillus gasseri (strain ATCC 33323 / DSM 20243 / BCRC 14619 / CIP 102991 / JCM 1131 / KCTC 3163 / NCIMB 11718 / NCTC 13722 / AM63), this protein is tRNA uridine 5-carboxymethylaminomethyl modification enzyme MnmG.